Consider the following 120-residue polypeptide: Large ribosomal subunit protein bL12 (120 aa).

Belongs to the bacterial ribosomal protein bL12 family. In terms of assembly, homodimer. Part of the ribosomal stalk of the 50S ribosomal subunit. Forms a multimeric L10(L12)X complex, where L10 forms an elongated spine to which 2 to 4 L12 dimers bind in a sequential fashion. Binds GTP-bound translation factors.

In terms of biological role, forms part of the ribosomal stalk which helps the ribosome interact with GTP-bound translation factors. Is thus essential for accurate translation. The sequence is that of Large ribosomal subunit protein bL12 from Shouchella clausii (strain KSM-K16) (Alkalihalobacillus clausii).